The primary structure comprises 184 residues: Threonylcarbamoyl-AMP synthase (184 aa).

In terms of domain architecture, YrdC-like spans 1–184; the sequence is MNNLENIVEQ…IFTQHIFRQG (184 aa).

This sequence belongs to the SUA5 family. TsaC subfamily.

The protein localises to the cytoplasm. The catalysed reaction is L-threonine + hydrogencarbonate + ATP = L-threonylcarbamoyladenylate + diphosphate + H2O. Its function is as follows. Required for the formation of a threonylcarbamoyl group on adenosine at position 37 (t(6)A37) in tRNAs that read codons beginning with adenine. Catalyzes the conversion of L-threonine, HCO(3)(-)/CO(2) and ATP to give threonylcarbamoyl-AMP (TC-AMP) as the acyladenylate intermediate, with the release of diphosphate. This chain is Threonylcarbamoyl-AMP synthase, found in Actinobacillus pleuropneumoniae serotype 5b (strain L20).